Here is a 92-residue protein sequence, read N- to C-terminus: Large ribosomal subunit protein eL43 (92 aa).

Cys39, Cys42, Cys57, and Cys60 together coordinate Zn(2+). A C4-type zinc finger spans residues 39–60; it reads CPNCGEDRVDRQGTGIWQCSYC.

This sequence belongs to the eukaryotic ribosomal protein eL43 family. Putative zinc-binding subfamily. As to quaternary structure, part of the 50S ribosomal subunit. Contacts protein L2. It depends on Zn(2+) as a cofactor.

Binds to the 23S rRNA. In Haloarcula marismortui (strain ATCC 43049 / DSM 3752 / JCM 8966 / VKM B-1809) (Halobacterium marismortui), this protein is Large ribosomal subunit protein eL43.